The sequence spans 299 residues: GTPase Era (299 aa).

One can recognise an Era-type G domain in the interval 5–175 (RSGFVCLVGR…IDVLAAALPP (171 aa)). The G1 stretch occupies residues 13-20 (GRPNTGKS). Residue 13–20 (GRPNTGKS) participates in GTP binding. Residues 39–43 (QTTRH) form a G2 region. The tract at residues 60–63 (DTPG) is G3. Residues 60 to 64 (DTPGL) and 124 to 127 (TKID) contribute to the GTP site. Residues 124–127 (TKID) form a G4 region. The segment at 154 to 156 (VSA) is G5. One can recognise a KH type-2 domain in the interval 206-285 (VRDELPHSLA…YLDLRVKVAK (80 aa)).

The protein belongs to the TRAFAC class TrmE-Era-EngA-EngB-Septin-like GTPase superfamily. Era GTPase family. As to quaternary structure, monomer.

The protein localises to the cell envelope. It localises to the secreted. It is found in the cell wall. Functionally, exhibits GTPase activity. Binds RNA but is probably not involved in ribosome assembly in mycobacteria. The chain is GTPase Era from Mycobacterium avium (strain 104).